The primary structure comprises 376 residues: Multiphosphoryl transfer protein (376 aa).

Residues 2–142 (FQLSVQDIHP…EELRALLMGE (141 aa)) enclose the PTS EIIA type-2 domain. His-62 functions as the Tele-phosphohistidine intermediate; for EIIA activity in the catalytic mechanism. His-62 bears the Phosphohistidine; by HPr mark. The m domain stretch occupies residues 156 to 284 (TLDVIASSLV…LTSDDALTDD (129 aa)). The 91-residue stretch at 285 to 375 (VLSAEFVVRN…DAIAAGLGEG (91 aa)) folds into the HPr domain. His-299 (pros-phosphohistidine intermediate; for HPr activity) is an active-site residue. The residue at position 299 (His-299) is a Phosphohistidine; by EI.

The protein localises to the cytoplasm. In terms of biological role, the phosphoenolpyruvate-dependent sugar phosphotransferase system (sugar PTS), a major carbohydrate active transport system, catalyzes the phosphorylation of incoming sugar substrates concomitantly with their translocation across the cell membrane. The enzyme II FruAB PTS system is involved in fructose transport. The sequence is that of Multiphosphoryl transfer protein (fruB) from Salmonella typhi.